A 134-amino-acid polypeptide reads, in one-letter code: uncharacterized protein (134 aa).

2 helical membrane passes run 49-69 (VAVP…SLDV) and 71-91 (LSMT…LNKV).

The protein localises to the cell membrane. This is an uncharacterized protein from Mycobacterium tuberculosis (strain ATCC 25618 / H37Rv).